The sequence spans 1004 residues: UPF0182 protein Mflv_4654 (1004 aa).

7 helical membrane-spanning segments follow: residues 18-38 (FLIAVSAVLVLLLLLGPRFID), 63-83 (LVIFFVVAILVGAVVFAGLAL), 114-134 (LIGIGVPLAIGVLAGFVGQSY), 176-196 (FVGVFLAFLANLLGHYLFGGI), 211-231 (IQLITLVGLLMLLKAVAYWFD), 260-280 (KLILMAIAVICAVAVFSAIFL), and 288-308 (IGVVLLLLSSLVVGAGWPLVV). Positions 896–940 (PGADATATGPAATEPPAGQAPQTQGNNTAPPAAQPPNRQGQAPAG) are enriched in low complexity. The interval 896–960 (PGADATATGP…TGPTQLSAAK (65 aa)) is disordered.

This sequence belongs to the UPF0182 family.

The protein resides in the cell membrane. In Mycolicibacterium gilvum (strain PYR-GCK) (Mycobacterium gilvum (strain PYR-GCK)), this protein is UPF0182 protein Mflv_4654.